Consider the following 199-residue polypeptide: Pyrrolidone-carboxylate peptidase (199 aa).

Catalysis depends on residues Glu80, Cys142, and His166.

It belongs to the peptidase C15 family. Homotetramer.

The protein localises to the cytoplasm. It catalyses the reaction Release of an N-terminal pyroglutamyl group from a polypeptide, the second amino acid generally not being Pro.. In terms of biological role, removes 5-oxoproline from various penultimate amino acid residues except L-proline. The protein is Pyrrolidone-carboxylate peptidase of Oceanobacillus iheyensis (strain DSM 14371 / CIP 107618 / JCM 11309 / KCTC 3954 / HTE831).